The chain runs to 747 residues: Sex-specific storage-protein 1 (747 aa).

The N-terminal stretch at 1-15 (MRVLVLLACLAAASA) is a signal peptide. Asn494 and Asn706 each carry an N-linked (GlcNAc...) asparagine glycan.

This sequence belongs to the hemocyanin family. As to expression, fat body.

It localises to the secreted. The protein localises to the extracellular space. Its function is as follows. Larval storage protein (LSP) which may serve as a store of amino acids for synthesis of adult proteins. This Bombyx mori (Silk moth) protein is Sex-specific storage-protein 1 (SP1).